The sequence spans 159 residues: Cell number regulator 4 (159 aa).

The chain crosses the membrane as a helical span at residues 52 to 74 (LAGLLYCLLLHAGVAVVPCHCIY).

This sequence belongs to the cornifelin family. In terms of tissue distribution, expressed in roots, coleoptiles, leaves, stalks, apical meristems, immature ears, endosperm, pericarp and tassel spikelets.

The protein localises to the membrane. This Zea mays (Maize) protein is Cell number regulator 4 (CNR4).